The following is a 442-amino-acid chain: D-aminoacyl-tRNA deacylase (442 aa).

Belongs to the DtdA deacylase family. As to quaternary structure, monomer. Zn(2+) is required as a cofactor.

It carries out the reaction a D-aminoacyl-tRNA + H2O = a tRNA + a D-alpha-amino acid + H(+). The catalysed reaction is glycyl-tRNA(Ala) + H2O = tRNA(Ala) + glycine + H(+). In terms of biological role, D-aminoacyl-tRNA deacylase with broad substrate specificity. By recycling D-aminoacyl-tRNA to D-amino acids and free tRNA molecules, this enzyme counteracts the toxicity associated with the formation of D-aminoacyl-tRNA entities in vivo. The polypeptide is D-aminoacyl-tRNA deacylase (Methanospirillum hungatei JF-1 (strain ATCC 27890 / DSM 864 / NBRC 100397 / JF-1)).